A 357-amino-acid polypeptide reads, in one-letter code: Uroporphyrinogen decarboxylase (357 aa).

Substrate-binding positions include 34–38 (RQAGR), D83, Y158, S213, and H336.

It belongs to the uroporphyrinogen decarboxylase family. As to quaternary structure, homodimer.

The protein resides in the cytoplasm. The catalysed reaction is uroporphyrinogen III + 4 H(+) = coproporphyrinogen III + 4 CO2. Its pathway is porphyrin-containing compound metabolism; protoporphyrin-IX biosynthesis; coproporphyrinogen-III from 5-aminolevulinate: step 4/4. In terms of biological role, catalyzes the decarboxylation of four acetate groups of uroporphyrinogen-III to yield coproporphyrinogen-III. The polypeptide is Uroporphyrinogen decarboxylase (Mycolicibacterium paratuberculosis (strain ATCC BAA-968 / K-10) (Mycobacterium paratuberculosis)).